A 102-amino-acid polypeptide reads, in one-letter code: uncharacterized protein (102 aa).

A disordered region spans residues 1–43 (MNNAHEENISSVTGFKSTSGSPAIGSSLPGRSGEGRSSSSSSG). Positions 9–21 (ISSVTGFKSTSGS) are enriched in polar residues. Residues 25-43 (GSSLPGRSGEGRSSSSSSG) show a composition bias toward low complexity.

This is an uncharacterized protein from Saccharomyces cerevisiae (strain ATCC 204508 / S288c) (Baker's yeast).